A 564-amino-acid polypeptide reads, in one-letter code: Beta-catenin-like protein 1 homolog (564 aa).

The interval 1 to 56 is disordered; sequence MDVDSIFKNTEETNKKRNPEEADSLEPASSRRRLAEENSDEENEEFDEEGGRFFGS. Over residues 9 to 20 the composition is skewed to basic and acidic residues; the sequence is NTEETNKKRNPE. A compositionally biased stretch (acidic residues) spans 37 to 48; that stretch reads ENSDEENEEFDE. Ser39 is subject to Phosphoserine. HEAT repeat units follow at residues 83-133 and 138-177; these read PTEL…VLSE and IPIFLKLDCVSTFLELMNHENADITITVLELLIELTDEDV. 5 ARM repeats span residues 179–229, 230–276, 277–326, 328–366, and 367–411; these read PDAL…LLSV, DNSI…LANS, KEAK…LVQE, KGKSLFLKEEGIELCILNMKHKGKSRYSTIKVLDYLLFG, and PLST…LFRS. Residues 465–528 are a coiled coil; the sequence is EKSTKWFLQQ…DALKNYHENL (64 aa).

It localises to the nucleus. In terms of biological role, probable spliceosomal component involved in the activation of pre-mRNA splicing. The polypeptide is Beta-catenin-like protein 1 homolog (ctnnbl1) (Schizosaccharomyces pombe (strain 972 / ATCC 24843) (Fission yeast)).